The primary structure comprises 449 residues: Nucleoprotein (449 aa).

The segment at 1–55 is disordered; that stretch reads MSFTPGKQSSSRASSGNRSGNGILKWADQSDQSRNVQTRGRRVQSKQTATSQQPS. Residues 9–22 are compositionally biased toward low complexity; it reads SSSRASSGNRSGNG. 2 stretches are compositionally biased toward polar residues: residues 29-38 and 45-55; these read QSDQSRNVQT and SKQTATSQQPS. The interval 52 to 194 is RNA-binding; the sequence is QQPSGGTVVP…GYYIEGSGRS (143 aa). The region spanning 61 to 190 is the CoV N NTD domain; it reads PYYSWFSGIT…VLPQGYYIEG (130 aa). RNA-binding residues include R106, R122, and R164. 3 disordered regions span residues 158–231, 266–297, and 387–449; these read PADI…VTPD, ILNKPRQKRSPNKQCTVQQCFGKRGPNQNFGG, and MMNI…TSEI. Position 167 is a phosphoserine; by host (S167). T174 is modified (phosphothreonine; by host). S191 is subject to Phosphoserine; by host. Composition is skewed to polar residues over residues 194 to 204 and 212 to 227; these read SAPNSRSTSRA and GSRSRANSGNRTSTPG. One can recognise a CoV N CTD domain in the interval 259–384; sequence AKEVRQKILN…QNLNAYQHQE (126 aa). A compositionally biased stretch (basic residues) spans 266–276; it reads ILNKPRQKRSP. The segment at 266-385 is dimerization; sequence ILNKPRQKRS…NLNAYQHQED (120 aa). At S391 the chain carries Phosphoserine; by host. A compositionally biased stretch (polar residues) spans 400 to 410; that stretch reads QKNGQVENDNI. The span at 423-440 shows a compositional bias: basic and acidic residues; sequence KSRELTAEDISLLKKMDE. S424 bears the Phosphoserine; by host mark. T428 bears the Phosphothreonine; by host mark.

Belongs to the betacoronavirus nucleocapsid protein family. In terms of assembly, homooligomer. Both monomeric and oligomeric forms interact with RNA. Interacts with protein M. Interacts with NSP3; this interaction serves to tether the genome to the newly translated replicase-transcriptase complex at a very early stage of infection. Post-translationally, ADP-ribosylated. The ADP-ribosylation is retained in the virion during infection. In terms of processing, phosphorylated on serine and threonine residues.

It localises to the virion. The protein localises to the host endoplasmic reticulum-Golgi intermediate compartment. Its subcellular location is the host Golgi apparatus. Its function is as follows. Packages the positive strand viral genome RNA into a helical ribonucleocapsid (RNP) and plays a fundamental role during virion assembly through its interactions with the viral genome and membrane protein M. Plays an important role in enhancing the efficiency of subgenomic viral RNA transcription as well as viral replication. This is Nucleoprotein from Sus scrofa (Pig).